Reading from the N-terminus, the 380-residue chain is Cytochrome b (380 aa).

The next 4 membrane-spanning stretches (helical) occupy residues 33–53 (FGSLLGVCLIIQILTGLFLAM), 77–98 (WLIRYLHANGASMFFICLFIHV), 113–133 (WNIGIVLLLTTMATAFVGYVL), and 178–198 (FFAFHFILPFIITALVLVHLL). His83 and His97 together coordinate heme b. 2 residues coordinate heme b: His182 and His196. His201 contacts a ubiquinone. 4 helical membrane passes run 226–246 (IKDLLGVLLLLMVLTILVLFF), 288–308 (LGGVXALXLSILILXXXPLLN), 320–340 (ITQVLYWIFXXNLXXXXXXXX), and 347–367 (XXXXXQIASICYXAIIIIFMP).

The protein belongs to the cytochrome b family. In terms of assembly, the cytochrome bc1 complex contains 11 subunits: 3 respiratory subunits (MT-CYB, CYC1 and UQCRFS1), 2 core proteins (UQCRC1 and UQCRC2) and 6 low-molecular weight proteins (UQCRH/QCR6, UQCRB/QCR7, UQCRQ/QCR8, UQCR10/QCR9, UQCR11/QCR10 and a cleavage product of UQCRFS1). This cytochrome bc1 complex then forms a dimer. Requires heme b as cofactor.

The protein resides in the mitochondrion inner membrane. Its function is as follows. Component of the ubiquinol-cytochrome c reductase complex (complex III or cytochrome b-c1 complex) that is part of the mitochondrial respiratory chain. The b-c1 complex mediates electron transfer from ubiquinol to cytochrome c. Contributes to the generation of a proton gradient across the mitochondrial membrane that is then used for ATP synthesis. The polypeptide is Cytochrome b (MT-CYB) (Rhipidomys leucodactylus (White-footed climbing mouse)).